A 517-amino-acid polypeptide reads, in one-letter code: Mucin-like protein 3 (517 aa).

The first 29 residues, 1 to 29 (MAQPVHSLCSAFGLQCCLLFLLASWGAGA), serve as a signal peptide directing secretion. Topologically, residues 30-448 (TTFQEYQKTG…GENDSFPAWA (419 aa)) are extracellular. The interval 67-341 (SGQRPPELPK…PTENLGNTTL (275 aa)) is disordered. Residues 83 to 93 (QKRHCNTTRHS) show a composition bias toward basic residues. N-linked (GlcNAc...) asparagine glycosylation is present at Asn88. The span at 105-116 (TIDHKSSTDNHE) shows a compositional bias: basic and acidic residues. A glycan (N-linked (GlcNAc...) asparagine) is linked at Asn124. A compositionally biased stretch (polar residues) spans 169–179 (RKSTTGKSTVT). The segment covering 180–190 (RKSDKTGRPLE) has biased composition (basic and acidic residues). Over residues 194–213 (STLDKTSTSSHKTTTSFHNS) the composition is skewed to low complexity. Composition is skewed to polar residues over residues 214-225 (GNSQTKQKSTSF), 232-243 (ASKTTYKTTGTP), and 263-283 (TKTTKNIQETISANELTQSLA). Basic and acidic residues predominate over residues 305–317 (TENRERTANENKK). Asn338 carries an N-linked (GlcNAc...) asparagine glycan. The helical transmembrane segment at 449–469 (IVIVVLVAVILLLVFLGLIFL) threads the bilayer. At 470–517 (VSYMMRTRRTLTQNTQYNDAEDEGGPNSYPVYLMEQQNLGMGQIPSPR) the chain is on the cytoplasmic side.

Detected in lung, esophagus, stomach, rectum, skin, cervix, testis, kidney, uterus and small intestine. Expressed in pancreas (at protein level).

It localises to the cell membrane. It is found in the cytoplasm. Functionally, may modulate NF-kappaB signaling and play a role in cell growth. The protein is Mucin-like protein 3 of Homo sapiens (Human).